A 237-amino-acid polypeptide reads, in one-letter code: LexA repressor (237 aa).

Polar residues predominate over residues 1–12; that stretch reads MPVKDSSSNKKN. A disordered region spans residues 1–20; it reads MPVKDSSSNKKNQIGKLSER. Positions 41–61 form a DNA-binding region, H-T-H motif; it reads IREIGDAAGLQSTSSVAYQLK. Positions 67 to 80 are enriched in basic and acidic residues; sequence GYLRRDPNKPRAVD. The disordered stretch occupies residues 67 to 112; sequence GYLRRDPNKPRAVDVRALPDPIPSKPGRKPGPKKSSVAISPDPAET. Residues S161 and K198 each act as for autocatalytic cleavage activity in the active site.

It belongs to the peptidase S24 family. Homodimer.

The catalysed reaction is Hydrolysis of Ala-|-Gly bond in repressor LexA.. Functionally, represses a number of genes involved in the response to DNA damage (SOS response), including recA and lexA. In the presence of single-stranded DNA, RecA interacts with LexA causing an autocatalytic cleavage which disrupts the DNA-binding part of LexA, leading to derepression of the SOS regulon and eventually DNA repair. The protein is LexA repressor of Corynebacterium diphtheriae (strain ATCC 700971 / NCTC 13129 / Biotype gravis).